The primary structure comprises 650 residues: Acetyl-coenzyme A synthetase (650 aa).

Residues arginine 191–arginine 194, threonine 311, and asparagine 335 contribute to the CoA site. ATP contacts are provided by residues glycine 387–proline 389, aspartate 411–threonine 416, aspartate 500, and arginine 515. Serine 523 provides a ligand contact to CoA. Arginine 526 is a binding site for ATP. The Mg(2+) site is built by valine 537, histidine 539, and valine 542. Arginine 584 serves as a coordination point for CoA. Position 609 is an N6-acetyllysine (lysine 609).

Belongs to the ATP-dependent AMP-binding enzyme family. Mg(2+) is required as a cofactor. In terms of processing, acetylated. Deacetylation by the SIR2-homolog deacetylase activates the enzyme.

The enzyme catalyses acetate + ATP + CoA = acetyl-CoA + AMP + diphosphate. In terms of biological role, catalyzes the conversion of acetate into acetyl-CoA (AcCoA), an essential intermediate at the junction of anabolic and catabolic pathways. AcsA undergoes a two-step reaction. In the first half reaction, AcsA combines acetate with ATP to form acetyl-adenylate (AcAMP) intermediate. In the second half reaction, it can then transfer the acetyl group from AcAMP to the sulfhydryl group of CoA, forming the product AcCoA. This is Acetyl-coenzyme A synthetase from Shewanella baltica (strain OS195).